Consider the following 202-residue polypeptide: Imidazoleglycerol-phosphate dehydratase (202 aa).

Belongs to the imidazoleglycerol-phosphate dehydratase family.

The protein resides in the cytoplasm. It carries out the reaction D-erythro-1-(imidazol-4-yl)glycerol 3-phosphate = 3-(imidazol-4-yl)-2-oxopropyl phosphate + H2O. The protein operates within amino-acid biosynthesis; L-histidine biosynthesis; L-histidine from 5-phospho-alpha-D-ribose 1-diphosphate: step 6/9. The sequence is that of Imidazoleglycerol-phosphate dehydratase from Rhizobium etli (strain CIAT 652).